Consider the following 242-residue polypeptide: Ribonuclease PH (242 aa).

Residues arginine 87 and 125 to 127 (STR) each bind phosphate.

Belongs to the RNase PH family. As to quaternary structure, homohexameric ring arranged as a trimer of dimers.

The catalysed reaction is tRNA(n+1) + phosphate = tRNA(n) + a ribonucleoside 5'-diphosphate. In terms of biological role, phosphorolytic 3'-5' exoribonuclease that plays an important role in tRNA 3'-end maturation. Removes nucleotide residues following the 3'-CCA terminus of tRNAs; can also add nucleotides to the ends of RNA molecules by using nucleoside diphosphates as substrates, but this may not be physiologically important. Probably plays a role in initiation of 16S rRNA degradation (leading to ribosome degradation) during starvation. The protein is Ribonuclease PH of Synechococcus sp. (strain JA-3-3Ab) (Cyanobacteria bacterium Yellowstone A-Prime).